Reading from the N-terminus, the 473-residue chain is Trigger factor (473 aa).

The 88-residue stretch at 174 to 261 folds into the PPIase FKBP-type domain; that stretch reads GDIAVVSFKG…LKDLKEKELP (88 aa). Residues 437–473 form a disordered region; sequence EISEKVTKSTTKSKTKSKTKKESQAKSEPNKKKKEKK. Basic and acidic residues predominate over residues 456 to 466; it reads KKESQAKSEPN.

It belongs to the FKBP-type PPIase family. Tig subfamily.

It is found in the cytoplasm. It carries out the reaction [protein]-peptidylproline (omega=180) = [protein]-peptidylproline (omega=0). Involved in protein export. Acts as a chaperone by maintaining the newly synthesized protein in an open conformation. Functions as a peptidyl-prolyl cis-trans isomerase. In Prochlorococcus marinus (strain MIT 9515), this protein is Trigger factor.